Here is a 518-residue protein sequence, read N- to C-terminus: Filamentous growth regulator 15 (518 aa).

Over residues 1–41 (MESTLSVSDEKLTNSSTALNNCGDNKESSQVLTTANTTTDN) the composition is skewed to polar residues. 3 disordered regions span residues 1–63 (MEST…SKER), 75–101 (VDPNQQSKNTVSDSVQDTTGVPSDHGK), and 261–307 (KSRS…KQHR). Positions 42 to 52 (QQVQPKSQHQQ) are enriched in low complexity. Positions 77–95 (PNQQSKNTVSDSVQDTTGV) are enriched in polar residues. The segment covering 262-274 (SRSRSKVTKKRKV) has biased composition (basic residues). The span at 283 to 298 (SNTATATTSVTTPDAN) shows a compositional bias: low complexity. The C2H2-type zinc finger occupies 374–406 (HECQLPSAEEPHKLCLRRFSRKYELIRHQETVH). Residues 492–518 (RKSSGDDTNYMETSDLESGEEEVTFNK) are disordered. Over residues 505–518 (SDLESGEEEVTFNK) the composition is skewed to acidic residues.

It is found in the nucleus. Probable transcription factor involved in the regulation of filamentous growth. The sequence is that of Filamentous growth regulator 15 (FGR15) from Candida albicans (strain SC5314 / ATCC MYA-2876) (Yeast).